Here is a 235-residue protein sequence, read N- to C-terminus: Retron Ec48 transmembrane protein (235 aa).

2 consecutive transmembrane segments (helical) span residues 11–31 and 64–84; these read IVGV…FETI and AFGW…ALMT.

The protein resides in the cell inner membrane. Functionally, membrane component of antiviral defense system Retron Ec48, composed of a non-coding RNA (ncRNA), a reverse transcriptase (RT) and this membrane protein. Expression of this retron confers protection against bacteriophages lambda, T2, T4, T5 and T7. At multiplicity of infection (MOI) of 0.02 cultures grow normally when infected with lambda without collapsing, at MOI 2 cultures enter growth stasis. At MOI 3 cell membranes are permeabilized within 15 minutes of infection but do not lyse, suggesting the phage are not able to finish a replication cycle. Antiviral defense is suppressed by mutations that knockout the lambda gam expression or phage T7 gp5.9 expression; both viral genes inhibit host RecBCD. The Ec48 retron may sense the integrity of the RecBCD enzyme; when RecBCD is perturbed by viral proteins the Ec48 effector (the membrane protein) is activated, leading to abortive infection and bacterial growth arrest. This Escherichia coli protein is Retron Ec48 transmembrane protein.